The following is a 277-amino-acid chain: Putative phosphoenolpyruvate synthase regulatory protein (277 aa).

Residue 157 to 164 participates in ADP binding; the sequence is GVSRCGKT.

This sequence belongs to the pyruvate, phosphate/water dikinase regulatory protein family. PSRP subfamily.

The catalysed reaction is [pyruvate, water dikinase] + ADP = [pyruvate, water dikinase]-phosphate + AMP + H(+). It carries out the reaction [pyruvate, water dikinase]-phosphate + phosphate + H(+) = [pyruvate, water dikinase] + diphosphate. Bifunctional serine/threonine kinase and phosphorylase involved in the regulation of the phosphoenolpyruvate synthase (PEPS) by catalyzing its phosphorylation/dephosphorylation. This is Putative phosphoenolpyruvate synthase regulatory protein from Enterobacter sp. (strain 638).